The sequence spans 163 residues: Choriogonadotropin subunit beta (163 aa).

The signal sequence occupies residues 1–20; it reads MEMLQGLLLCLLLSTGGAWA. 6 disulfides stabilise this stretch: cysteine 29–cysteine 76, cysteine 43–cysteine 91, cysteine 46–cysteine 129, cysteine 54–cysteine 107, cysteine 58–cysteine 109, and cysteine 112–cysteine 119. A glycan (N-linked (GlcNAc...) asparagine) is linked at asparagine 50. An N-linked (GlcNAc...) asparagine glycan is attached at asparagine 124. A compositionally biased stretch (polar residues) spans 135–151; it reads QDSSSNVPPSNLTSPSQ. Residues 135 to 163 are disordered; the sequence is QDSSSNVPPSNLTSPSQLLEPAVTPLVPQ. The O-linked (GalNAc...) serine glycan is linked to serine 139. Asparagine 145 carries N-linked (GlcNAc...) asparagine glycosylation. Serine 150 is a glycosylation site (O-linked (GalNAc...) serine).

The protein belongs to the glycoprotein hormones subunit beta family. In terms of assembly, heterodimer of a common alpha chain and a unique beta chain which confers biological specificity to thyrotropin, lutropin, follitropin and gonadotropin.

Its subcellular location is the secreted. In terms of biological role, stimulates the ovaries to synthesize the steroids that are essential for the maintenance of pregnancy. This is Choriogonadotropin subunit beta (CGB) from Saimiri boliviensis boliviensis (Bolivian squirrel monkey).